We begin with the raw amino-acid sequence, 257 residues long: MRVAVSGAAGRMGRLVVKNAVAEGLKVVQAFDINEVGKDAGELAGVGKIGVPIEDDISKLDADVLIDFTTAEAAMKNAEVAAEKGVRVVMGTTGFTDEDRKRLAELAEKVPMIVSPNFSLGVNIFWKIVEYAAKMLYEWDAEIVELHHRHKRDSPSGTALKLAEIIRKVKEEKGIEADLKTCREGISPRESEIGVFGIRGGDVVGEHTVFFFGSGERIELTHRAMSRECFAIGAVRAAKWIAKVDKPGFYTMDDFLE.

Residues Gly7–Met12, Asp32, Gly91–Thr93, and Ser115–Phe118 contribute to the NAD(+) site. His147 functions as the Proton donor/acceptor in the catalytic mechanism. His148 is a (S)-2,3,4,5-tetrahydrodipicolinate binding site. Catalysis depends on Lys151, which acts as the Proton donor. Gly157–Thr158 provides a ligand contact to (S)-2,3,4,5-tetrahydrodipicolinate.

It belongs to the DapB family.

The protein localises to the cytoplasm. The catalysed reaction is (S)-2,3,4,5-tetrahydrodipicolinate + NAD(+) + H2O = (2S,4S)-4-hydroxy-2,3,4,5-tetrahydrodipicolinate + NADH + H(+). The enzyme catalyses (S)-2,3,4,5-tetrahydrodipicolinate + NADP(+) + H2O = (2S,4S)-4-hydroxy-2,3,4,5-tetrahydrodipicolinate + NADPH + H(+). The protein operates within amino-acid biosynthesis; L-lysine biosynthesis via DAP pathway; (S)-tetrahydrodipicolinate from L-aspartate: step 4/4. Its function is as follows. Catalyzes the conversion of 4-hydroxy-tetrahydrodipicolinate (HTPA) to tetrahydrodipicolinate. This Archaeoglobus fulgidus (strain ATCC 49558 / DSM 4304 / JCM 9628 / NBRC 100126 / VC-16) protein is 4-hydroxy-tetrahydrodipicolinate reductase.